Consider the following 590-residue polypeptide: Aspartate--tRNA(Asp/Asn) ligase (590 aa).

An L-aspartate-binding site is contributed by E172. Residues 196-199 form an aspartate region; it reads QLFK. R218 lines the L-aspartate pocket. ATP is bound by residues 218 to 220 and Q227; that span reads RDE. H449 serves as a coordination point for L-aspartate. Position 484 (E484) interacts with ATP. R491 contributes to the L-aspartate binding site. 536–539 is a binding site for ATP; sequence GVDR.

This sequence belongs to the class-II aminoacyl-tRNA synthetase family. Type 1 subfamily. In terms of assembly, homodimer.

Its subcellular location is the cytoplasm. The enzyme catalyses tRNA(Asx) + L-aspartate + ATP = L-aspartyl-tRNA(Asx) + AMP + diphosphate. Functionally, aspartyl-tRNA synthetase with relaxed tRNA specificity since it is able to aspartylate not only its cognate tRNA(Asp) but also tRNA(Asn). Reaction proceeds in two steps: L-aspartate is first activated by ATP to form Asp-AMP and then transferred to the acceptor end of tRNA(Asp/Asn). The protein is Aspartate--tRNA(Asp/Asn) ligase of Francisella tularensis subsp. tularensis (strain WY96-3418).